The primary structure comprises 458 residues: Riboflavin transporter 2 (458 aa).

The next 5 helical transmembrane spans lie at 11 to 31 (LFGM…PLIV), 38 to 58 (WYLP…PLFV), 73 to 93 (PVIY…AFFW), 97 to 117 (VPLA…LLSV), and 146 to 166 (GVSG…VVHC). Asparagine 168, asparagine 176, asparagine 182, and asparagine 199 each carry an N-linked (GlcNAc...) asparagine glycan. Residues 204–224 (VFFLFLSAMMVVCLAAFLLLN) traverse the membrane as a helical segment. The tract at residues 249 to 274 (DQALSLSHRPQEEKPMISSPDSHRRA) is disordered. Helical transmembrane passes span 279 to 299 (FGTG…LAWV), 325 to 345 (LAAT…MFLP), 349 to 369 (LVLI…IMAM), 388 to 408 (IVIA…IIGV), and 417 to 437 (ALVW…LSMF).

Belongs to the riboflavin transporter family.

The protein resides in the cell membrane. It catalyses the reaction riboflavin(in) = riboflavin(out). Functionally, plasma membrane transporter mediating the uptake by cells of the water soluble vitamin B2/riboflavin that plays a key role in biochemical oxidation-reduction reactions of the carbohydrate, lipid, and amino acid metabolism. This is Riboflavin transporter 2 (rft2) from Salmo salar (Atlantic salmon).